A 192-amino-acid polypeptide reads, in one-letter code: Xanthine phosphoribosyltransferase (192 aa).

Xanthine is bound by residues Leu20 and Asn27. 5-phospho-alpha-D-ribose 1-diphosphate is bound at residue 128 to 132 (ANGDA). Lys156 contributes to the xanthine binding site.

This sequence belongs to the purine/pyrimidine phosphoribosyltransferase family. Xpt subfamily. As to quaternary structure, homodimer.

It localises to the cytoplasm. It carries out the reaction XMP + diphosphate = xanthine + 5-phospho-alpha-D-ribose 1-diphosphate. The protein operates within purine metabolism; XMP biosynthesis via salvage pathway; XMP from xanthine: step 1/1. Converts the preformed base xanthine, a product of nucleic acid breakdown, to xanthosine 5'-monophosphate (XMP), so it can be reused for RNA or DNA synthesis. The polypeptide is Xanthine phosphoribosyltransferase (Staphylococcus aureus (strain MRSA252)).